Consider the following 382-residue polypeptide: 8-amino-7-oxononanoate synthase (382 aa).

Positions 22 and 29 each coordinate substrate. Residue 109–110 (GF) participates in pyridoxal 5'-phosphate binding. Histidine 134 lines the substrate pocket. Pyridoxal 5'-phosphate is bound by residues serine 182, 207-210 (DDAH), and 233-236 (TLSK). An N6-(pyridoxal phosphate)lysine modification is found at lysine 236. Threonine 345 contacts substrate.

Belongs to the class-II pyridoxal-phosphate-dependent aminotransferase family. BioF subfamily. In terms of assembly, homodimer. The cofactor is pyridoxal 5'-phosphate.

It catalyses the reaction 6-carboxyhexanoyl-[ACP] + L-alanine + H(+) = (8S)-8-amino-7-oxononanoate + holo-[ACP] + CO2. The protein operates within cofactor biosynthesis; biotin biosynthesis. Functionally, catalyzes the decarboxylative condensation of pimeloyl-[acyl-carrier protein] and L-alanine to produce 8-amino-7-oxononanoate (AON), [acyl-carrier protein], and carbon dioxide. This Granulibacter bethesdensis (strain ATCC BAA-1260 / CGDNIH1) protein is 8-amino-7-oxononanoate synthase.